The chain runs to 101 residues: Nucleoid-associated protein Bind_0255 (101 aa).

Belongs to the YbaB/EbfC family. In terms of assembly, homodimer.

The protein localises to the cytoplasm. The protein resides in the nucleoid. Binds to DNA and alters its conformation. May be involved in regulation of gene expression, nucleoid organization and DNA protection. The protein is Nucleoid-associated protein Bind_0255 of Beijerinckia indica subsp. indica (strain ATCC 9039 / DSM 1715 / NCIMB 8712).